Here is a 301-residue protein sequence, read N- to C-terminus: GTPase Era (301 aa).

The Era-type G domain maps to Lys6–Ile173. Positions Gly14–Ser21 are G1. Gly14 to Ser21 is a binding site for GTP. Positions Gln40–Asn44 are G2. Residues Asp61–Gly64 are G3. GTP contacts are provided by residues Asp61–Ile65 and Asn123–Asp126. The interval Asn123–Asp126 is G4. Positions Ile152 to Ala154 are G5. The region spanning Thr204–Lys282 is the KH type-2 domain.

The protein belongs to the TRAFAC class TrmE-Era-EngA-EngB-Septin-like GTPase superfamily. Era GTPase family. Monomer.

It is found in the cytoplasm. It localises to the cell membrane. Functionally, an essential GTPase that binds both GDP and GTP, with rapid nucleotide exchange. Plays a role in 16S rRNA processing and 30S ribosomal subunit biogenesis and possibly also in cell cycle regulation and energy metabolism. In Listeria monocytogenes serotype 4a (strain HCC23), this protein is GTPase Era.